A 250-amino-acid chain; its full sequence is 5'-nucleotidase SurE (250 aa).

A divalent metal cation is bound by residues aspartate 8, aspartate 9, serine 39, and asparagine 91.

It belongs to the SurE nucleotidase family. A divalent metal cation is required as a cofactor.

Its subcellular location is the cytoplasm. It carries out the reaction a ribonucleoside 5'-phosphate + H2O = a ribonucleoside + phosphate. Functionally, nucleotidase that shows phosphatase activity on nucleoside 5'-monophosphates. The chain is 5'-nucleotidase SurE from Syntrophotalea carbinolica (strain DSM 2380 / NBRC 103641 / GraBd1) (Pelobacter carbinolicus).